The chain runs to 111 residues: Photosystem II reaction center Psb28 protein (111 aa).

The protein belongs to the Psb28 family. In terms of assembly, part of the photosystem II complex.

The protein resides in the cellular thylakoid membrane. The protein is Photosystem II reaction center Psb28 protein of Nostoc sp. (strain PCC 7120 / SAG 25.82 / UTEX 2576).